Reading from the N-terminus, the 305-residue chain is 2-aminophenol 1,6-dioxygenase beta subunit (305 aa).

His14, His63, and His196 together coordinate Fe cation.

This sequence belongs to the LigB/MhpB extradiol dioxygenase family. In terms of assembly, heterotetramer of 2 alpha and 2 beta subunits. Fe(2+) is required as a cofactor.

It catalyses the reaction 2-aminophenol + O2 = 2-aminomuconate 6-semialdehyde. Strongly inhibited by CuSO(4), FeCl(3), K(3)[Fe(CN)(6)], AgNO3, HgCl(2) and MnCl(2). In terms of biological role, component of the 2-aminophenol 1,6-dioxygenase complex that catalyzes the ring fission of 2-aminophenol to produce 2-aminomuconic 6-semialdehyde. AmnB seems to be the catalytic subunit of the complex. The enzyme is also active toward 2-amino-p-cresol, 6-amino-m-cresol, 2-amino-m-cresol, 2-amino-4,5-dimethylphenol, 2-amino-4-chlorophenol, and catechol. The sequence is that of 2-aminophenol 1,6-dioxygenase beta subunit (amnB) from Pseudomonas sp.